We begin with the raw amino-acid sequence, 385 residues long: Acetate kinase (385 aa).

Asn9 is a Mg(2+) binding site. Lys16 contributes to the ATP binding site. A substrate-binding site is contributed by Arg87. The Proton donor/acceptor role is filled by Asp144. Residues His202–Gly206 and Asp277–Arg279 contribute to the ATP site. Glu373 lines the Mg(2+) pocket.

Belongs to the acetokinase family. In terms of assembly, homodimer. Requires Mg(2+) as cofactor. It depends on Mn(2+) as a cofactor.

Its subcellular location is the cytoplasm. It catalyses the reaction acetate + ATP = acetyl phosphate + ADP. The protein operates within metabolic intermediate biosynthesis; acetyl-CoA biosynthesis; acetyl-CoA from acetate: step 1/2. In terms of biological role, catalyzes the formation of acetyl phosphate from acetate and ATP. Can also catalyze the reverse reaction. The chain is Acetate kinase from Rickettsia akari (strain Hartford).